The sequence spans 885 residues: Cytosolic carboxypeptidase-like protein 5 (885 aa).

The 414-residue stretch at 157–570 (YPFSYSDCQD…AMAIAALDMA (414 aa)) folds into the Peptidase M14 domain. Positions 252 and 255 each coordinate Zn(2+). The tract at residues 343 to 402 (NSQSPSEHQHSSHLPPDAPLSDPEKADSLQNRAHLGRSSSGDKPEAWTQTEVAEQKPNSV) is disordered. The segment covering 388–402 (AWTQTEVAEQKPNSV) has biased composition (polar residues). His434 is a binding site for Zn(2+). Glu516 acts as the Proton donor/acceptor in catalysis. Disordered regions lie at residues 605-733 (TTVN…LASS) and 783-839 (RLQA…PRPC). A compositionally biased stretch (polar residues) spans 620–640 (PPRSNNGLPVSCSENTLSRAR). 2 stretches are compositionally biased toward low complexity: residues 641–666 (SFSTGTSAGGSSSSQQNSPQMKNSPS) and 714–733 (PTSSSLAPSPTPASSNLASS). A Phosphoserine modification is found at Ser840.

Belongs to the peptidase M14 family. Zn(2+) is required as a cofactor.

The protein localises to the cytoplasm. It localises to the cytosol. Its subcellular location is the nucleus. It is found in the cytoskeleton. The protein resides in the spindle. The protein localises to the midbody. It catalyses the reaction gamma-L-glutamyl-L-glutamyl-[protein] + H2O = L-glutamyl-[protein] + L-glutamate. The enzyme catalyses (L-glutamyl)(n+1)-gamma-L-glutamyl-L-glutamyl-[protein] + H2O = (L-glutamyl)(n)-gamma-L-glutamyl-L-glutamyl-[protein] + L-glutamate. It carries out the reaction C-terminal L-alpha-aminoacyl-L-glutamyl-[tubulin] + H2O = C-terminal L-alpha-aminoacyl-[tubulin] + L-glutamate. The catalysed reaction is C-terminal L-alpha-aminoacyl-L-glutamyl-L-glutamyl-[tubulin] + H2O = C-terminal L-alpha-aminoacyl-L-glutamyl-[tubulin] + L-glutamate. Metallocarboxypeptidase that mediates deglutamylation of tubulin and non-tubulin target proteins. Catalyzes the removal of polyglutamate side chains present on the gamma-carboxyl group of glutamate residues within the C-terminal tail of alpha- and beta-tubulin. Cleaves alpha- and gamma-linked polyglutamate tubulin side-chain, as well as the branching point glutamate. Also catalyzes the removal of alpha-linked glutamate residues from the carboxy-terminus of alpha-tubulin. Mediates deglutamylation of nucleotidyltransferase CGAS, leading to CGAS antiviral defense response activation. The protein is Cytosolic carboxypeptidase-like protein 5 (AGBL5) of Bos taurus (Bovine).